Here is a 120-residue protein sequence, read N- to C-terminus: Large ribosomal subunit protein eL8 (120 aa).

This sequence belongs to the eukaryotic ribosomal protein eL8 family. Part of the 50S ribosomal subunit. Probably part of the RNase P complex.

It localises to the cytoplasm. Functionally, multifunctional RNA-binding protein that recognizes the K-turn motif in ribosomal RNA, the RNA component of RNase P, box H/ACA, box C/D and box C'/D' sRNAs. The chain is Large ribosomal subunit protein eL8 from Methanosarcina acetivorans (strain ATCC 35395 / DSM 2834 / JCM 12185 / C2A).